Consider the following 63-residue polypeptide: Large ribosomal subunit protein uL29 (63 aa).

It belongs to the universal ribosomal protein uL29 family.

This is Large ribosomal subunit protein uL29 from Bordetella avium (strain 197N).